The primary structure comprises 132 residues: Small ribosomal subunit protein uS9 (132 aa).

The protein belongs to the universal ribosomal protein uS9 family.

This Mycoplasma pneumoniae (strain ATCC 29342 / M129 / Subtype 1) (Mycoplasmoides pneumoniae) protein is Small ribosomal subunit protein uS9 (rpsI).